The sequence spans 163 residues: Small ribosomal subunit protein bS18c (163 aa).

Disordered stretches follow at residues 1–52 (MYIS…IGPG) and 144–163 (NLRNSNQNLRNNNRNLSSDC). The span at 7 to 48 (PFRKSKQPFRKSKQTFHKSKQPFRKFKQPFRKSKQPFRRRSR) shows a compositional bias: basic residues.

The protein belongs to the bacterial ribosomal protein bS18 family. Part of the 30S ribosomal subunit.

The protein localises to the plastid. The protein resides in the chloroplast. This is Small ribosomal subunit protein bS18c from Sorghum bicolor (Sorghum).